The chain runs to 68 residues: DNA-directed RNA polymerase subunit omega (68 aa).

This sequence belongs to the RNA polymerase subunit omega family. In terms of assembly, the RNAP catalytic core consists of 2 alpha, 1 beta, 1 beta' and 1 omega subunit. When a sigma factor is associated with the core the holoenzyme is formed, which can initiate transcription.

The enzyme catalyses RNA(n) + a ribonucleoside 5'-triphosphate = RNA(n+1) + diphosphate. In terms of biological role, promotes RNA polymerase assembly. Latches the N- and C-terminal regions of the beta' subunit thereby facilitating its interaction with the beta and alpha subunits. This chain is DNA-directed RNA polymerase subunit omega, found in Neisseria gonorrhoeae (strain NCCP11945).